Consider the following 852-residue polypeptide: Leucine--tRNA ligase (852 aa).

The 'HIGH' region motif lies at 41 to 51 (PYPSGRIHIGH). Positions 623 to 627 (KMSKS) match the 'KMSKS' region motif. Lys-626 contributes to the ATP binding site.

This sequence belongs to the class-I aminoacyl-tRNA synthetase family.

The protein resides in the cytoplasm. The enzyme catalyses tRNA(Leu) + L-leucine + ATP = L-leucyl-tRNA(Leu) + AMP + diphosphate. In Ruegeria pomeroyi (strain ATCC 700808 / DSM 15171 / DSS-3) (Silicibacter pomeroyi), this protein is Leucine--tRNA ligase.